Reading from the N-terminus, the 267-residue chain is Octanoyltransferase (267 aa).

Residues 1 to 30 are disordered; that stretch reads MPTGKLRQKPPYAAIMTNSPVTPSTETQQP. Over residues 16 to 28 the composition is skewed to polar residues; that stretch reads MTNSPVTPSTETQ. The BPL/LPL catalytic domain occupies 77-265; that stretch reads GTASELVWLV…AFESVFGPRQ (189 aa). Substrate is bound by residues 116-123, 196-198, and 209-211; these read RGGEYTYH, AIG, and GIA. The Acyl-thioester intermediate role is filled by Cys-227.

The protein belongs to the LipB family.

Its subcellular location is the cytoplasm. It catalyses the reaction octanoyl-[ACP] + L-lysyl-[protein] = N(6)-octanoyl-L-lysyl-[protein] + holo-[ACP] + H(+). It participates in protein modification; protein lipoylation via endogenous pathway; protein N(6)-(lipoyl)lysine from octanoyl-[acyl-carrier-protein]: step 1/2. Its function is as follows. Catalyzes the transfer of endogenously produced octanoic acid from octanoyl-acyl-carrier-protein onto the lipoyl domains of lipoate-dependent enzymes. Lipoyl-ACP can also act as a substrate although octanoyl-ACP is likely to be the physiological substrate. The protein is Octanoyltransferase of Brucella abortus biovar 1 (strain 9-941).